The following is a 367-amino-acid chain: Ferrochelatase (367 aa).

Residues His226 and Glu307 each coordinate Fe cation.

This sequence belongs to the ferrochelatase family.

The protein localises to the cytoplasm. It carries out the reaction heme b + 2 H(+) = protoporphyrin IX + Fe(2+). It participates in porphyrin-containing compound metabolism; protoheme biosynthesis; protoheme from protoporphyrin-IX: step 1/1. In terms of biological role, catalyzes the ferrous insertion into protoporphyrin IX. This chain is Ferrochelatase, found in Burkholderia pseudomallei (strain 1106a).